The primary structure comprises 410 residues: Probable peptidoglycan glycosyltransferase FtsW (410 aa).

Over 1 to 37 (MRSEERQLNLFGTSVNWSWPNLFKEREAPGMQLYDRA) the chain is Cytoplasmic. A helical transmembrane segment spans residues 38-58 (LLFAVLSLICFGFVMVMSASM). The Periplasmic portion of the chain corresponds to 59-69 (PEAQSLTGNPY). A helical transmembrane segment spans residues 70-90 (HFAIRHFAYLVGCAVIAAVVL). Topologically, residues 91 to 99 (RIEMSRWQQ) are cytoplasmic. Residues 100 to 120 (FSPLLLLIVGIMLVAVLLVGT) traverse the membrane as a helical segment. Residues 121 to 131 (SVNGATRWLSV) are Periplasmic-facing. The chain crosses the membrane as a helical span at residues 132–154 (GPIRIQVAELAKFAFTIYMAGYL). Over 155 to 163 (VRRHQEIRE) the chain is Cytoplasmic. The chain crosses the membrane as a helical span at residues 164–184 (NAKGFYKPIAVFAVYAFLILM). Topologically, residues 185–186 (QP) are periplasmic. A helical membrane pass occupies residues 187-207 (DLGTVVVLFVGTVGLLFLAGA). Arg208 is a topological domain (cytoplasmic). Residues 209–229 (LLDFFALILTGVMAFVALVLL) traverse the membrane as a helical segment. Topologically, residues 230-291 (EPYRMRRVTS…PEAHTDFIFA (62 aa)) are periplasmic. The chain crosses the membrane as a helical span at residues 292 to 312 (VIGEELGFIGIVVVLSVLLFV). Residues 313-336 (ALRAIKLGNLCIEIDKPFEGYLAY) are Cytoplasmic-facing. The chain crosses the membrane as a helical span at residues 337-357 (AIGIWFCFQTVVNVGASIGML). The Periplasmic segment spans residues 358–364 (PTKGLTL). Residues 365–385 (PFISYGGSSLWVMTAAAMILI) traverse the membrane as a helical segment. Topologically, residues 386-410 (RIDHERRLSSIQAVQGKKVNDNREY) are cytoplasmic.

Belongs to the SEDS family. FtsW subfamily.

Its subcellular location is the cell inner membrane. It carries out the reaction [GlcNAc-(1-&gt;4)-Mur2Ac(oyl-L-Ala-gamma-D-Glu-L-Lys-D-Ala-D-Ala)](n)-di-trans,octa-cis-undecaprenyl diphosphate + beta-D-GlcNAc-(1-&gt;4)-Mur2Ac(oyl-L-Ala-gamma-D-Glu-L-Lys-D-Ala-D-Ala)-di-trans,octa-cis-undecaprenyl diphosphate = [GlcNAc-(1-&gt;4)-Mur2Ac(oyl-L-Ala-gamma-D-Glu-L-Lys-D-Ala-D-Ala)](n+1)-di-trans,octa-cis-undecaprenyl diphosphate + di-trans,octa-cis-undecaprenyl diphosphate + H(+). It functions in the pathway cell wall biogenesis; peptidoglycan biosynthesis. In terms of biological role, peptidoglycan polymerase that is essential for cell division. In Shewanella sediminis (strain HAW-EB3), this protein is Probable peptidoglycan glycosyltransferase FtsW.